The chain runs to 583 residues: Scarecrow-like protein 30 (583 aa).

Disordered stretches follow at residues Gly-107 to Lys-154 and Glu-182 to Gln-205. Over residues Gly-115–His-124 the composition is skewed to polar residues. A compositionally biased stretch (basic and acidic residues) spans Glu-131–Asp-140. The 380-residue stretch at Gln-200–Lys-579 folds into the GRAS domain. The leucine repeat I (LRI) stretch occupies residues Val-207 to Thr-266. The interval Tyr-285–Gly-350 is VHIID. Positions Leu-316–Asp-320 match the VHIID motif. Residues Glu-366–Asp-398 are leucine repeat II (LRII). The interval Thr-407–Ser-501 is PFYRE. An SAW region spans residues Ala-504–Lys-579.

This sequence belongs to the GRAS family. As to quaternary structure, interacts with SNRNP35 and CYP95. As to expression, expressed in seedlings, leaves, sepals, stamen and pistil, and in the quiescent center of root meristem.

It localises to the nucleus. In terms of biological role, probable transcription factor involved in plant development. The chain is Scarecrow-like protein 30 (SCL30) from Arabidopsis thaliana (Mouse-ear cress).